We begin with the raw amino-acid sequence, 728 residues long: E3 ubiquitin-protein ligase LNX (728 aa).

An RING-type zinc finger spans residues 45-83; it reads CHICLQALLDPLDTPCGHTYCTLCLTNFLVEKDFCPVDR. The NPXY motif motif lies at 185–188; the sequence is NPAY. The interval 185-220 is disordered; it reads NPAYVSSVEDGEPVANSSDSGRSNRTRARPFERSTM. Residues 186-244 form an interaction with MAGEB18 region; sequence PAYVSSVEDGEPVANSSDSGRSNRTRARPFERSTMRSRSFKKINRALSALRRTKSGSVV. PDZ domains follow at residues 278-362 and 385-467; these read SIKI…VLRE and HVIL…VSRQ. The residue at position 445 (Ser445) is a Phosphoserine. Residues 481 to 500 form a disordered region; it reads WISNGQQSPGPGERNTASKP. 2 PDZ domains span residues 508–593 and 638–723; these read VVSV…ALEV and DVIL…IASW.

As to quaternary structure, interacts with CXADR. Interacts with MAGEB18 and MAGEF1. Interacts with the phosphotyrosine interaction domain of all isoforms of NUMB. IGSF5/JAM4 interacts with isoform 2 through the second PDZ domain, other isoforms may also interact with IGSF5/JAM4. Isoform 1 and isoform 2 are expressed in the heart. Isoform 1 is also expressed in kidney, lung and skeletal muscle while isoform 2 is also expressed in brain.

It localises to the cytoplasm. It carries out the reaction S-ubiquitinyl-[E2 ubiquitin-conjugating enzyme]-L-cysteine + [acceptor protein]-L-lysine = [E2 ubiquitin-conjugating enzyme]-L-cysteine + N(6)-ubiquitinyl-[acceptor protein]-L-lysine.. It functions in the pathway protein modification; protein ubiquitination. Functionally, E3 ubiquitin-protein ligase that mediates ubiquitination and subsequent proteasomal degradation of NUMB. E3 ubiquitin ligases accept ubiquitin from an E2 ubiquitin-conjugating enzyme in the form of a thioester and then directly transfers the ubiquitin to targeted substrates. Mediates ubiquitination of isoform p66 and isoform p72 of NUMB, but not that of isoform p71 or isoform p65. Its function is as follows. Isoform 2 provides an endocytic scaffold for IGSF5/JAM4. The chain is E3 ubiquitin-protein ligase LNX (Lnx1) from Mus musculus (Mouse).